Here is a 449-residue protein sequence, read N- to C-terminus: 23S rRNA (uracil(1939)-C(5))-methyltransferase RlmD (449 aa).

In terms of domain architecture, TRAM spans 1 to 66; it reads MGRSRHHNKL…AKFDEAKVVE (66 aa). Cysteine 79, cysteine 85, cysteine 88, and cysteine 169 together coordinate [4Fe-4S] cluster. S-adenosyl-L-methionine contacts are provided by glutamine 280, phenylalanine 309, asparagine 314, glutamate 330, asparagine 357, and aspartate 379. The active-site Nucleophile is cysteine 405.

Belongs to the class I-like SAM-binding methyltransferase superfamily. RNA M5U methyltransferase family. RlmD subfamily.

It carries out the reaction uridine(1939) in 23S rRNA + S-adenosyl-L-methionine = 5-methyluridine(1939) in 23S rRNA + S-adenosyl-L-homocysteine + H(+). Functionally, catalyzes the formation of 5-methyl-uridine at position 1939 (m5U1939) in 23S rRNA. This is 23S rRNA (uracil(1939)-C(5))-methyltransferase RlmD from Francisella tularensis subsp. tularensis (strain FSC 198).